Reading from the N-terminus, the 381-residue chain is Alkanesulfonate monooxygenase (381 aa).

It belongs to the SsuD family. As to quaternary structure, homotetramer.

It catalyses the reaction an alkanesulfonate + FMNH2 + O2 = an aldehyde + FMN + sulfite + H2O + 2 H(+). Functionally, catalyzes the desulfonation of aliphatic sulfonates. This is Alkanesulfonate monooxygenase from Enterobacter sp. (strain 638).